A 302-amino-acid chain; its full sequence is Probable protein S-acyltransferase 13 (302 aa).

The next 2 helical transmembrane spans lie at 17 to 37 (SIMI…VVVV) and 56 to 76 (VLAF…SVVV). The DHHC domain occupies 116–166 (RYCRKCNQYKPPRSHHCSVCGRCILKMDHHCVWVVNCVGANNYKSFLLFLF). Cys146 (S-palmitoyl cysteine intermediate) is an active-site residue. The next 2 helical transmembrane spans lie at 166–186 (FYTF…FLVF) and 204–224 (SFVA…FLIM).

Belongs to the DHHC palmitoyltransferase family.

It localises to the cell membrane. Its subcellular location is the cytoplasmic vesicle membrane. The catalysed reaction is L-cysteinyl-[protein] + hexadecanoyl-CoA = S-hexadecanoyl-L-cysteinyl-[protein] + CoA. Its function is as follows. Palmitoyl acyltransferase. The polypeptide is Probable protein S-acyltransferase 13 (PAT13) (Arabidopsis thaliana (Mouse-ear cress)).